The following is a 338-amino-acid chain: D-erythrose-4-phosphate dehydrogenase (338 aa).

NAD(+) is bound at residue 11–12; sequence RI. Substrate contacts are provided by residues 153–155, arginine 199, 212–213, and arginine 235; these read SCT and TK. Catalysis depends on cysteine 154, which acts as the Nucleophile. NAD(+) is bound at residue asparagine 317.

Belongs to the glyceraldehyde-3-phosphate dehydrogenase family. Epd subfamily. In terms of assembly, homotetramer.

The protein resides in the cytoplasm. It carries out the reaction D-erythrose 4-phosphate + NAD(+) + H2O = 4-phospho-D-erythronate + NADH + 2 H(+). Its pathway is cofactor biosynthesis; pyridoxine 5'-phosphate biosynthesis; pyridoxine 5'-phosphate from D-erythrose 4-phosphate: step 1/5. In terms of biological role, catalyzes the NAD-dependent conversion of D-erythrose 4-phosphate to 4-phosphoerythronate. The polypeptide is D-erythrose-4-phosphate dehydrogenase (Shewanella oneidensis (strain ATCC 700550 / JCM 31522 / CIP 106686 / LMG 19005 / NCIMB 14063 / MR-1)).